A 340-amino-acid polypeptide reads, in one-letter code: Zinc finger protein 367 (340 aa).

Residues L96–A140 form a disordered region. Low complexity predominate over residues G101 to G114. Positions G127 to A140 are enriched in basic and acidic residues. 2 C2H2-type zinc fingers span residues I157–H179 and Y185–H209. The tract at residues K280–Q317 is disordered. Residues Q299 to N332 adopt a coiled-coil conformation. Position 300 is a phosphoserine (S300). Over residues K307–Q317 the composition is skewed to basic and acidic residues.

It belongs to the krueppel C2H2-type zinc-finger protein family.

It is found in the nucleus. In terms of biological role, transcriptional activator. May be involved in transcriptional activation of erythroid genes. In Rattus norvegicus (Rat), this protein is Zinc finger protein 367 (Znf367).